The sequence spans 74 residues: uncharacterized protein (74 aa).

Basic and acidic residues-rich tracts occupy residues 1-13 (MKKQ…HQLK) and 20-60 (IKAK…KSFE). The interval 1 to 74 (MKKQKSIDKH…ESQMDWHQYK (74 aa)) is disordered. Over residues 64–74 (NESQMDWHQYK) the composition is skewed to polar residues.

This is an uncharacterized protein from Bacillus subtilis (strain 168).